Reading from the N-terminus, the 427-residue chain is Thymidine phosphorylase (427 aa).

It belongs to the thymidine/pyrimidine-nucleoside phosphorylase family. In terms of assembly, homodimer.

The catalysed reaction is thymidine + phosphate = 2-deoxy-alpha-D-ribose 1-phosphate + thymine. Functionally, the enzymes which catalyze the reversible phosphorolysis of pyrimidine nucleosides are involved in the degradation of these compounds and in their utilization as carbon and energy sources, or in the rescue of pyrimidine bases for nucleotide synthesis. This chain is Thymidine phosphorylase (deoA), found in Mycobacterium tuberculosis (strain CDC 1551 / Oshkosh).